The following is a 218-amino-acid chain: Ras-related protein Rab-11B (218 aa).

Gly2 bears the N-acetylglycine mark. 11 residues coordinate GTP: Ser20, Gly21, Gly23, Lys24, Ser25, Asn26, Asn37, Leu38, Ser40, Ser42, and Thr43. Ser25 contributes to the Mg(2+) binding site. The Switch 1 motif lies at 36–47; sequence FNLESKSTIGVE. Mg(2+)-binding residues include Thr43 and Asp66. The Switch 2 motif lies at 67–86; that stretch reads TAGQERYRAITSAYYRGAVG. 6 residues coordinate GTP: Gly69, Asn124, Lys125, Asp127, Ala155, and Leu156. Residues 183-218 are disordered; sequence DRSAHDESPGNNVVDISVPPTTDGQKSNKLQCCQNM. A compositionally biased stretch (polar residues) spans 201–218; it reads PPTTDGQKSNKLQCCQNM. S-geranylgeranyl cysteine attachment occurs at residues Cys214 and Cys215. Cys215 carries the post-translational modification Cysteine methyl ester. Positions 216–218 are cleaved as a propeptide — removed in mature form; the sequence is QNM.

The protein belongs to the small GTPase superfamily. Rab family. The cofactor is Mg(2+).

It localises to the recycling endosome membrane. The protein localises to the cytoplasmic vesicle. Its subcellular location is the secretory vesicle. It is found in the synaptic vesicle membrane. The protein resides in the phagosome membrane. It catalyses the reaction GTP + H2O = GDP + phosphate + H(+). Regulated by guanine nucleotide exchange factors (GEFs) which promote the exchange of bound GDP for free GTP. Regulated by GTPase activating proteins (GAPs) which increase the GTP hydrolysis activity. Inhibited by GDP dissociation inhibitors (GDIs) which prevent Rab-GDP dissociation. Functionally, the small GTPases Rab are key regulators of intracellular membrane trafficking, from the formation of transport vesicles to their fusion with membranes. Rabs cycle between an inactive GDP-bound form and an active GTP-bound form that is able to recruit to membranes different set of downstream effectors directly responsible for vesicle formation, movement, tethering and fusion. That Rab plays a role in endocytic recycling, regulating apical recycling of several transmembrane proteins including cystic fibrosis transmembrane conductance regulator/CFTR, epithelial sodium channel/ENaC, potassium voltage-gated channel, and voltage-dependent L-type calcium channel. May also regulate constitutive and regulated secretion, like insulin granule exocytosis. Required for melanosome transport and release from melanocytes. Also regulates V-ATPase intracellular transport in response to extracellular acidosis. This Diplobatis ommata (Ocellated electric ray) protein is Ras-related protein Rab-11B.